Consider the following 1396-residue polypeptide: DNA-directed RNA polymerase subunit beta' (1396 aa).

Zn(2+) contacts are provided by Cys-72, Cys-74, Cys-87, and Cys-90. Residues Asp-463, Asp-465, and Asp-467 each coordinate Mg(2+). Cys-814, Cys-889, Cys-896, and Cys-899 together coordinate Zn(2+).

This sequence belongs to the RNA polymerase beta' chain family. The RNAP catalytic core consists of 2 alpha, 1 beta, 1 beta' and 1 omega subunit. When a sigma factor is associated with the core the holoenzyme is formed, which can initiate transcription. Requires Mg(2+) as cofactor. Zn(2+) serves as cofactor.

The enzyme catalyses RNA(n) + a ribonucleoside 5'-triphosphate = RNA(n+1) + diphosphate. Functionally, DNA-dependent RNA polymerase catalyzes the transcription of DNA into RNA using the four ribonucleoside triphosphates as substrates. The sequence is that of DNA-directed RNA polymerase subunit beta' from Chlamydia trachomatis serovar A (strain ATCC VR-571B / DSM 19440 / HAR-13).